Reading from the N-terminus, the 416-residue chain is MIKLTRRQIIRRTAGTLFALSPIASAVAKTVRAPQFTAARIWPSHTYTRLTLESTAALKYQHFTLDNPGRLVVDIQNANINTVLHGLSQKVMADDPFIRSIRAGQNTPTTVRLVIDLKQPTHAQVFALPPVGGFKNRLVVDLYPHGMDADDPMMALLNGSLNKTLRGSPEADLAQNTTPQPGRGRNGRRPVIMLDPGHGGEDPGAISPGGLQEKHVVLSIARETKNQLEALGYNVFMTRNEDVFIPLGVRVAKGRARRADVFVSIHADAFTSPSARGTGVYMLNTKGATSSAAKFLEQTQNNADAVGGVPTSGNRNVDTALLDMTQTATLRDSRKLGKLVLEELGRLNHLHKGRVDEANFAVLRAPDMPSILVETAFLSNPAEEKLLGSESFRRQCAQSIASGVQRYINTSVLKRG.

The signal sequence occupies residues 1 to 26 (MIKLTRRQIIRRTAGTLFALSPIASA). The interval 166–191 (RGSPEADLAQNTTPQPGRGRNGRRPV) is disordered. A MurNAc-LAA domain is found at 192–405 (IMLDPGHGGE…CAQSIASGVQ (214 aa)).

Belongs to the N-acetylmuramoyl-L-alanine amidase 3 family.

Its subcellular location is the periplasm. It carries out the reaction Hydrolyzes the link between N-acetylmuramoyl residues and L-amino acid residues in certain cell-wall glycopeptides.. Its function is as follows. Cell-wall hydrolase involved in septum cleavage during cell division. This Neisseria meningitidis serogroup B (strain ATCC BAA-335 / MC58) protein is N-acetylmuramoyl-L-alanine amidase AmiC (amiC).